A 776-amino-acid chain; its full sequence is Semaphorin-4F (776 aa).

The N-terminal stretch at Met-1–Gly-39 is a signal peptide. Topologically, residues Arg-40 to Val-665 are extracellular. The Sema domain maps to Arg-47–Thr-515. N-linked (GlcNAc...) asparagine glycosylation is present at Asn-69. A disulfide bond links Cys-117 and Cys-127. An N-linked (GlcNAc...) asparagine glycan is attached at Asn-138. 3 disulfides stabilise this stretch: Cys-145/Cys-154, Cys-278/Cys-389, and Cys-302/Cys-348. A glycan (N-linked (GlcNAc...) asparagine) is linked at Asn-514. One can recognise a PSI domain in the interval Asn-517–Pro-568. 3 disulfide bridges follow: Cys-518–Cys-535, Cys-527–Cys-544, and Cys-592–Cys-633. Residues Val-585–Ala-640 enclose the Ig-like C2-type domain. The chain crosses the membrane as a helical span at residues Gly-666–Ile-686. At Gly-687–Ile-776 the chain is on the cytoplasmic side. A disordered region spans residues Asp-702 to Ser-741. Ser-724 and Ser-726 each carry phosphoserine. Residues Thr-774 to Ile-776 carry the PDZ-binding motif.

The protein belongs to the semaphorin family. As to quaternary structure, interacts (via PDZ-binding motif) with DLG4/SAP90 (via PDZ domain 2); this interaction may promote translocation of DLG4/SAP90 to the membrane. Expressed at low levels in the developing embryo. Expressed at high levels in the lung and adult central nervous system, including the dorsal root ganglia.

Its subcellular location is the cell membrane. The protein localises to the postsynaptic density. It is found in the perikaryon. It localises to the cell projection. The protein resides in the dendrite. Probable cell surface receptor that regulates oligodendroglial precursor cell migration. Might also regulate differentiation of oligodendroglial precursor cells. Has growth cone collapse activity against retinal ganglion-cell axons. This is Semaphorin-4F (Sema4f) from Rattus norvegicus (Rat).